A 1061-amino-acid chain; its full sequence is Chimeric ERCC6-PGBD3 protein (1061 aa).

Positions 1–39 (MPNEGIPHSSQTQEQDCLQSQPVSNNEEMAIKQESGGDG) are disordered. Residues 8–27 (HSSQTQEQDCLQSQPVSNNE) show a composition bias toward polar residues. Serine 158 carries the post-translational modification Phosphoserine. Lysine 255 participates in a covalent cross-link: Glycyl lysine isopeptide (Lys-Gly) (interchain with G-Cter in SUMO2). Disordered regions lie at residues 287–323 (KQGC…VLSK), 344–466 (GKVG…QRLS), 494–521 (VIQP…INNL), and 537–573 (SDAE…SRRR). Basic and acidic residues predominate over residues 353–363 (RPWESDMRPEA). Residues 364 to 392 (EGDSEGEESEYFPTEEEEEEEDDEVEGAE) show a composition bias toward acidic residues. 2 positions are modified to phosphoserine: serine 429 and serine 430. A compositionally biased stretch (basic and acidic residues) spans 451 to 462 (RYRDDGDEDYYK). The segment covering 506–515 (SDEESGDEEG) has biased composition (acidic residues). Serine 554 bears the Phosphoserine mark.

In terms of tissue distribution, expressed in heart and oocytes, but not in granulosa cells (at protein level).

Its subcellular location is the nucleus. Its function is as follows. Involved in repair of DNA damage following UV irradiation, acting either in the absence of ERCC6 or synergistically with ERCC6. Involved in the regulation of gene expression. In the absence of ERCC6, induces the expression of genes characteristic of interferon-like antiviral responses. This response is almost completely suppressed in the presence of ERCC6. In the presence of ERCC6, regulates the expression of genes involved in metabolism regulation, including IGFBP5 and IGFBP7. In vitro binds to PGBD3-related transposable elements, called MER85s; these non-autonomous 140 bp elements are characterized by the presence of PGBD3 terminal inverted repeats and the absence of internal transposase ORF. The chain is Chimeric ERCC6-PGBD3 protein from Homo sapiens (Human).